A 79-amino-acid chain; its full sequence is Dolichyl-diphosphooligosaccharide--protein glycosyltransferase subunit TMEM258 (79 aa).

2 helical membrane-spanning segments follow: residues 17 to 37 (VFPH…AWFF) and 55 to 75 (LISL…LLWV).

The protein belongs to the OST5 family. Component of the oligosaccharyltransferase (OST) complex.

The protein localises to the membrane. The protein resides in the endoplasmic reticulum. It is found in the cytoplasm. The protein operates within protein modification; protein glycosylation. In terms of biological role, subunit of the oligosaccharyl transferase (OST) complex that catalyzes the initial transfer of a defined glycan (Glc(3)Man(9)GlcNAc(2) in eukaryotes) from the lipid carrier dolichol-pyrophosphate to an asparagine residue within an Asn-X-Ser/Thr consensus motif in nascent polypeptide chains, the first step in protein N-glycosylation. N-glycosylation occurs cotranslationally and the complex associates with the Sec61 complex at the channel-forming translocon complex that mediates protein translocation across the endoplasmic reticulum (ER). All subunits are required for a maximal enzyme activity. The protein is Dolichyl-diphosphooligosaccharide--protein glycosyltransferase subunit TMEM258 of Xenopus laevis (African clawed frog).